A 383-amino-acid chain; its full sequence is Sterol 24-C-methyltransferase ERG6 (383 aa).

N-acetylserine is present on serine 2. Serine 99 is subject to Phosphoserine.

It belongs to the class I-like SAM-binding methyltransferase superfamily. Erg6/SMT family. As to quaternary structure, interacts with ERG28.

The protein localises to the microsome. It localises to the mitochondrion. It carries out the reaction zymosterol + S-adenosyl-L-methionine = fecosterol + S-adenosyl-L-homocysteine + H(+). Its pathway is steroid metabolism; ergosterol biosynthesis; ergosterol from zymosterol: step 1/5. In terms of biological role, sterol 24-C-methyltransferase; part of the third module of ergosterol biosynthesis pathway that includes the late steps of the pathway. ERG6 catalyzes the methyl transfer from S-adenosyl-methionine to the C-24 of zymosterol to form fecosterol. The third module or late pathway involves the ergosterol synthesis itself through consecutive reactions that mainly occur in the endoplasmic reticulum (ER) membrane. Firstly, the squalene synthase ERG9 catalyzes the condensation of 2 farnesyl pyrophosphate moieties to form squalene, which is the precursor of all steroids. Squalene synthase is crucial for balancing the incorporation of farnesyl diphosphate (FPP) into sterol and nonsterol isoprene synthesis. Secondly, the squalene epoxidase ERG1 catalyzes the stereospecific oxidation of squalene to (S)-2,3-epoxysqualene, which is considered to be a rate-limiting enzyme in steroid biosynthesis. Then, the lanosterol synthase ERG7 catalyzes the cyclization of (S)-2,3 oxidosqualene to lanosterol, a reaction that forms the sterol core. In the next steps, lanosterol is transformed to zymosterol through a complex process involving various demethylation, reduction and desaturation reactions. The lanosterol 14-alpha-demethylase ERG11 (also known as CYP51) catalyzes C14-demethylation of lanosterol to produce 4,4'-dimethyl cholesta-8,14,24-triene-3-beta-ol, which is critical for ergosterol biosynthesis. The C-14 reductase ERG24 reduces the C14=C15 double bond of 4,4-dimethyl-cholesta-8,14,24-trienol to produce 4,4-dimethyl-cholesta-8,24-dienol. 4,4-dimethyl-cholesta-8,24-dienol is substrate of the C-4 demethylation complex ERG25-ERG26-ERG27 in which ERG25 catalyzes the three-step monooxygenation required for the demethylation of 4,4-dimethyl and 4alpha-methylsterols, ERG26 catalyzes the oxidative decarboxylation that results in a reduction of the 3-beta-hydroxy group at the C-3 carbon to an oxo group, and ERG27 is responsible for the reduction of the keto group on the C-3. ERG28 has a role as a scaffold to help anchor ERG25, ERG26 and ERG27 to the endoplasmic reticulum and ERG29 regulates the activity of the iron-containing C4-methylsterol oxidase ERG25. Then, the sterol 24-C-methyltransferase ERG6 catalyzes the methyl transfer from S-adenosyl-methionine to the C-24 of zymosterol to form fecosterol. The C-8 sterol isomerase ERG2 catalyzes the reaction which results in unsaturation at C-7 in the B ring of sterols and thus converts fecosterol to episterol. The sterol-C5-desaturase ERG3 then catalyzes the introduction of a C-5 double bond in the B ring to produce 5-dehydroepisterol. The C-22 sterol desaturase ERG5 further converts 5-dehydroepisterol into ergosta-5,7,22,24(28)-tetraen-3beta-ol by forming the C-22(23) double bond in the sterol side chain. Finally, ergosta-5,7,22,24(28)-tetraen-3beta-ol is substrate of the C-24(28) sterol reductase ERG4 to produce ergosterol. The polypeptide is Sterol 24-C-methyltransferase ERG6 (Saccharomyces cerevisiae (strain ATCC 204508 / S288c) (Baker's yeast)).